The chain runs to 90 residues: Albumin-1 (90 aa).

Alanine 1 is a signal peptide. 3 disulfides stabilise this stretch: cysteine 4–cysteine 21, cysteine 8–cysteine 23, and cysteine 16–cysteine 34. Residues 40–47 constitute a propeptide that is removed on maturation; it reads LSSVAKMI.

Post-translationally, the C-terminal glycine may be removed from A1b.

Its function is as follows. A1b binds to basic 7S globulin (BG) and stimulates its phosphorylation activity. The sequence is that of Albumin-1 (LEG) from Phaseolus angularis (Azuki bean).